The sequence spans 711 residues: DNA topoisomerase 3 (711 aa).

A Toprim domain is found at K2 to T135. Mg(2+) is bound by residues E8 and D104. Positions Y152 to V580 constitute a Topo IA-type catalytic domain. An interaction with DNA region spans residues S186 to Q191. Residue Y305 is the O-(5'-phospho-DNA)-tyrosine intermediate of the active site. The segment at M691 to L711 is disordered.

Belongs to the type IA topoisomerase family. Requires Mg(2+) as cofactor.

The catalysed reaction is ATP-independent breakage of single-stranded DNA, followed by passage and rejoining.. Its function is as follows. Releases the supercoiling and torsional tension of DNA, which is introduced during the DNA replication and transcription, by transiently cleaving and rejoining one strand of the DNA duplex. Introduces a single-strand break via transesterification at a target site in duplex DNA. The scissile phosphodiester is attacked by the catalytic tyrosine of the enzyme, resulting in the formation of a DNA-(5'-phosphotyrosyl)-enzyme intermediate and the expulsion of a 3'-OH DNA strand. The free DNA strand then undergoes passage around the unbroken strand, thus removing DNA supercoils. Finally, in the religation step, the DNA 3'-OH attacks the covalent intermediate to expel the active-site tyrosine and restore the DNA phosphodiester backbone. The polypeptide is DNA topoisomerase 3 (Staphylococcus aureus (strain MRSA252)).